We begin with the raw amino-acid sequence, 124 residues long: MPAPAATYERVVYKNPSEYHYMKVCLEFQDCGVGLNAAQFKQLLISAVKDLFGEVDAALPLDILTYEEKTLSAILRICSSGLVKLWSSLTLLGSYKGKKCAFRVIQVSPFLLALSGNSRELVLD.

Belongs to the eukaryotic/archaeal RNase P protein component 2 family. As to quaternary structure, RNase P consists of a catalytic RNA moiety and about 10 protein subunits; POP1, POP4, POP5, POP7, RPP14, RPP21, RPP25, RPP30, RPP38 and RPP40. Within the RNase P complex, POP1, POP7 and RPP25 form the 'finger' subcomplex, POP5, RPP14, RPP40 and homodimeric RPP30 form the 'palm' subcomplex, and RPP21, POP4 and RPP38 form the 'wrist' subcomplex. All subunits of the RNase P complex interact with the catalytic RNA.

It localises to the nucleus. It is found in the nucleolus. Its function is as follows. Component of ribonuclease P, a ribonucleoprotein complex that generates mature tRNA molecules by cleaving their 5'-ends. The protein is Ribonuclease P protein subunit p14 (RPP14) of Homo sapiens (Human).